We begin with the raw amino-acid sequence, 221 residues long: Phosphoribosylformylglycinamidine synthase subunit PurQ (221 aa).

A Glutamine amidotransferase type-1 domain is found at 6–221; the sequence is VGVVVFPGSN…LFTLKSLILK (216 aa). Residue Cys-89 is the Nucleophile of the active site. Active-site residues include His-197 and Glu-199.

In terms of assembly, part of the FGAM synthase complex composed of 1 PurL, 1 PurQ and 2 PurS subunits.

Its subcellular location is the cytoplasm. It catalyses the reaction N(2)-formyl-N(1)-(5-phospho-beta-D-ribosyl)glycinamide + L-glutamine + ATP + H2O = 2-formamido-N(1)-(5-O-phospho-beta-D-ribosyl)acetamidine + L-glutamate + ADP + phosphate + H(+). It carries out the reaction L-glutamine + H2O = L-glutamate + NH4(+). It participates in purine metabolism; IMP biosynthesis via de novo pathway; 5-amino-1-(5-phospho-D-ribosyl)imidazole from N(2)-formyl-N(1)-(5-phospho-D-ribosyl)glycinamide: step 1/2. Its function is as follows. Part of the phosphoribosylformylglycinamidine synthase complex involved in the purines biosynthetic pathway. Catalyzes the ATP-dependent conversion of formylglycinamide ribonucleotide (FGAR) and glutamine to yield formylglycinamidine ribonucleotide (FGAM) and glutamate. The FGAM synthase complex is composed of three subunits. PurQ produces an ammonia molecule by converting glutamine to glutamate. PurL transfers the ammonia molecule to FGAR to form FGAM in an ATP-dependent manner. PurS interacts with PurQ and PurL and is thought to assist in the transfer of the ammonia molecule from PurQ to PurL. In Prochlorococcus marinus (strain MIT 9312), this protein is Phosphoribosylformylglycinamidine synthase subunit PurQ.